We begin with the raw amino-acid sequence, 748 residues long: Protein REPRESSOR OF SILENCING 3 (748 aa).

One can recognise an RRM domain in the interval 10–86; the sequence is VRLHVGGLGE…GRLRLEKAKE (77 aa). 4 disordered regions span residues 244-318, 350-531, 579-600, and 729-748; these read KSIL…QSID, GSSK…VSDT, VDEE…GGSS, and EWAK…NSEE. A compositionally biased stretch (polar residues) spans 266–288; it reads THPSKNRQTISLEETGRQESSQA. Over residues 294–314 the composition is skewed to basic and acidic residues; sequence KPSEVVPDKSSDEPSRTKDLE. Residues 373–382 are compositionally biased toward basic residues; the sequence is LKKKTKRKRV. Composition is skewed to acidic residues over residues 403–416, 439–472, and 491–518; these read DTMA…DSDA, DDSD…DAVE, and ESDD…DVGS. The segment covering 520 to 531 has biased composition (polar residues); that stretch reads DSGSLADTVSDT.

Ubiquitously expressed.

Its subcellular location is the nucleus. It is found in the nucleolus. The protein localises to the nucleoplasm. Functionally, RNA-binding protein required for DNA demethylation and to eluviate siRNA-mediated transcriptional gene silencing (TGS), probably by guiding ROS1. Can bind specifically single stranded G-rich RNAs of 21-, 24- or 26-nt corresponding to promoter sequence of target genes; this interaction directs demethylation of target sequences. The protein is Protein REPRESSOR OF SILENCING 3 of Arabidopsis thaliana (Mouse-ear cress).